Consider the following 86-residue polypeptide: Large ribosomal subunit protein bL27 (86 aa).

The interval 1–26 (MASKKAGGSTKNGRDSQSKRLGVKRF) is disordered.

Belongs to the bacterial ribosomal protein bL27 family.

The polypeptide is Large ribosomal subunit protein bL27 (Bdellovibrio bacteriovorus (strain ATCC 15356 / DSM 50701 / NCIMB 9529 / HD100)).